The chain runs to 827 residues: Leucine--tRNA ligase (827 aa).

The 'HIGH' region signature appears at 42-52 (PYPSGKLHMGH). Positions 583 to 587 (KMSKS) match the 'KMSKS' region motif. Position 586 (K586) interacts with ATP.

The protein belongs to the class-I aminoacyl-tRNA synthetase family.

The protein resides in the cytoplasm. The catalysed reaction is tRNA(Leu) + L-leucine + ATP = L-leucyl-tRNA(Leu) + AMP + diphosphate. In Pelotomaculum thermopropionicum (strain DSM 13744 / JCM 10971 / SI), this protein is Leucine--tRNA ligase.